A 397-amino-acid polypeptide reads, in one-letter code: Serine/threonine-protein kinase 17A (397 aa).

The segment at 1 to 23 (MIPLEKPGSGGSPSAAASGSGPG) is disordered. Ser-9 is subject to Phosphoserine. The 261-residue stretch at 44–304 (LSPGRELGRG…AEECLKHPWL (261 aa)) folds into the Protein kinase domain. Residues 50-58 (LGRGKFAVV) and Lys-73 contribute to the ATP site. The Proton acceptor role is filled by Asp-169.

It belongs to the protein kinase superfamily. CAMK Ser/Thr protein kinase family. DAP kinase subfamily. Autophosphorylated. Highly expressed in bone marrow. Lower levels in brain, heart, lung, liver and kidney.

Its subcellular location is the nucleus. It catalyses the reaction L-seryl-[protein] + ATP = O-phospho-L-seryl-[protein] + ADP + H(+). The enzyme catalyses L-threonyl-[protein] + ATP = O-phospho-L-threonyl-[protein] + ADP + H(+). Its activity is regulated as follows. Inhibited by thiazolidinedione-type compounds: inhibited by furan- and pyridone- thiazolidinediones. Functionally, acts as a positive regulator of apoptosis. May also act as a regulator of cellular reactive oxygen species. The protein is Serine/threonine-protein kinase 17A (STK17A) of Oryctolagus cuniculus (Rabbit).